The sequence spans 249 residues: DNA polymerase sliding clamp 1 (249 aa).

This sequence belongs to the PCNA family. As to quaternary structure, homotrimer. The subunits circularize to form a toroid; DNA passes through its center. Replication factor C (RFC) is required to load the toroid on the DNA. Interacts with TIP.

With respect to regulation, inhibited by interaction with the PCNA inhibitor TIP. Its function is as follows. Sliding clamp subunit that acts as a moving platform for DNA processing. Responsible for tethering the catalytic subunit of DNA polymerase and other proteins to DNA during high-speed replication. The chain is DNA polymerase sliding clamp 1 from Thermococcus kodakarensis (strain ATCC BAA-918 / JCM 12380 / KOD1) (Pyrococcus kodakaraensis (strain KOD1)).